A 587-amino-acid polypeptide reads, in one-letter code: Ankyrin repeat and SOCS box protein 14 (587 aa).

11 ANK repeats span residues 81-110 (NGWL…PSTW), 116-145 (NGET…NPNA), 149-178 (EGNS…DVNL), 182-211 (NERT…YPDA), 215-244 (YGFT…DVHS), 248-277 (DSSS…DANI), 281-310 (SGHL…IAAI), 313-342 (SGIS…DVNF), 355-384 (QRKS…LPNQ), 385-414 (DPVN…NVNY), and 416-449 (CRVN…DTER). Positions 521 to 576 (WPEIHFILANPRSLQHLCRLKIRKCMGRLRLRCPVFMSFLPLPNLLKAYVLYKEYD) constitute an SOCS box domain.

This sequence belongs to the ankyrin SOCS box (ASB) family. As to quaternary structure, interacts with MAPRE2; this interaction promotes MAPRE2 degradation.

Its pathway is protein modification; protein ubiquitination. May be a substrate-recognition component of a SCF-like ECS (Elongin-Cullin-SOCS-box protein) E3 ubiquitin-protein ligase complex which mediates the ubiquitination and subsequent proteasomal degradation of target proteins. Plays a role in the inhibition of cardiomyocyte nuclear proliferation by mediating the ubiquitination and degradation of MAPRE2. The sequence is that of Ankyrin repeat and SOCS box protein 14 (Asb14) from Mus musculus (Mouse).